Consider the following 57-residue polypeptide: MSKTVVRKNESLEDALRRFKRTVSKSGTIQEVRKREFYEKPSVKRKKKSEAARKRKW.

Belongs to the bacterial ribosomal protein bS21 family.

The chain is Small ribosomal subunit protein bS21 from Lysinibacillus sphaericus (strain C3-41).